The chain runs to 285 residues: Release factor glutamine methyltransferase (285 aa).

Residues 119 to 123 (GTGSG), Glu-142, Trp-175, and Asn-191 contribute to the S-adenosyl-L-methionine site. 191–194 (NPPY) is a binding site for substrate.

It belongs to the protein N5-glutamine methyltransferase family. PrmC subfamily.

It carries out the reaction L-glutaminyl-[peptide chain release factor] + S-adenosyl-L-methionine = N(5)-methyl-L-glutaminyl-[peptide chain release factor] + S-adenosyl-L-homocysteine + H(+). Its function is as follows. Methylates the class 1 translation termination release factors RF1/PrfA and RF2/PrfB on the glutamine residue of the universally conserved GGQ motif. This is Release factor glutamine methyltransferase from Burkholderia pseudomallei (strain K96243).